The sequence spans 335 residues: Glutamyl-tRNA reductase (335 aa).

Residues 60–63, S110, 115–117, and Q121 contribute to the substrate site; these read TCHR and ETE. C61 acts as the Nucleophile in catalysis. Residue 189–194 participates in NADP(+) binding; the sequence is GYSEIN.

The protein belongs to the glutamyl-tRNA reductase family. As to quaternary structure, homodimer.

It carries out the reaction (S)-4-amino-5-oxopentanoate + tRNA(Glu) + NADP(+) = L-glutamyl-tRNA(Glu) + NADPH + H(+). It participates in porphyrin-containing compound metabolism; protoporphyrin-IX biosynthesis; 5-aminolevulinate from L-glutamyl-tRNA(Glu): step 1/2. Functionally, catalyzes the NADPH-dependent reduction of glutamyl-tRNA(Glu) to glutamate 1-semialdehyde (GSA). The sequence is that of Glutamyl-tRNA reductase from Chlamydia trachomatis serovar L2 (strain ATCC VR-902B / DSM 19102 / 434/Bu).